We begin with the raw amino-acid sequence, 2505 residues long: Fatty acid synthase (2505 aa).

Met1 carries the post-translational modification N-acetylmethionine. A Ketosynthase family 3 (KS3) domain is found at 1–406 (MEEVVIAGMS…GANVHVILQP (406 aa)). An N6-acetyllysine modification is found at Lys59. Ser63 is modified (phosphoserine). Residue Lys70 is modified to N6-acetyllysine. Cys161 (for beta-ketoacyl synthase activity) is an active-site residue. Position 207 is a phosphoserine (Ser207). His293 (for beta-ketoacyl synthase activity) is an active-site residue. Lys298 is subject to N6-acetyllysine. The For beta-ketoacyl synthase activity role is filled by His331. The segment at 429–817 (RTMEAVQGLL…IDINPNALFP (389 aa)) is acyl and malonyl transferases. Lys528 is modified (N6-acetyllysine). The active-site For malonyltransferase activity is Ser581. Residues 647-648 (DT) and Phe671 contribute to the an acyl-CoA site. Lys673 is subject to N6-acetyllysine. The residue at position 725 (Ser725) is a Phosphoserine. Arg773 contributes to the an acyl-CoA binding site. At Lys790 the chain carries N6-acetyllysine. Residues 844–966 (IPVAEDFPNG…KVYQWEDPDS (123 aa)) form an N-terminal hotdog fold region. Positions 844–1112 (IPVAEDFPNG…TSRRQQEQLV (269 aa)) constitute a PKS/mFAS DH domain. His878 functions as the Proton acceptor; for dehydratase activity in the catalytic mechanism. Positions 983 to 1112 (VSRLTQGEVY…TSRRQQEQLV (130 aa)) are C-terminal hotdog fold. At Lys993 the chain carries N6-acetyllysine. Asp1032 functions as the Proton donor; for dehydratase activity in the catalytic mechanism. An N6-acetyllysine modification is found at Lys1276. The residue at position 1464 (Cys1464) is an S-nitrosocysteine. Ser1578 and Ser1588 each carry phosphoserine. Residues 1629 to 1857 (DVPSSWTLEE…VQVREEEPEA (229 aa)) form an enoyl reductase region. 1665 to 1682 (VLIHSGSGGVGQAAISIA) provides a ligand contact to NADP(+). At Lys1698 the chain carries N6-(pyridoxal phosphate)lysine; alternate. Lys1698 carries the N6-acetyllysine; alternate modification. Lys1765, Lys1841, and Lys1989 each carry N6-acetyllysine. Residue 1765-1780 (KFDLSNNHPLGMAIFL) coordinates NADP(+). The beta-ketoacyl reductase stretch occupies residues 1858-2113 (MLPGAQPTLI…VLAEKKAVAH (256 aa)). An S-nitrosocysteine modification is found at Cys2085. In terms of domain architecture, Carrier spans 2113–2193 (HGDGEAQRDL…EMSSKAGSDT (81 aa)). An O-(pantetheine 4'-phosphoryl)serine; alternate modification is found at Ser2151. At Ser2151 the chain carries Phosphoserine; alternate. Phosphoserine is present on residues Ser2191 and Ser2230. The thioesterase stretch occupies residues 2202–2505 (NDTSLKQAQL…AEPRVSVREG (304 aa)). The For thioesterase activity role is filled by Ser2302. Lys2385 carries the post-translational modification N6-acetyllysine. Lys2443 participates in a covalent cross-link: Glycyl lysine isopeptide (Lys-Gly) (interchain with G-Cter in SUMO2). The active-site For thioesterase activity is the His2475.

In terms of assembly, homodimer which is arranged in a head to tail fashion. Interacts with CEACAM1; this interaction is insulin and phosphorylation-dependent; reduces fatty-acid synthase activity. In terms of processing, S-nitrosylation of Fatty acid synthase at cysteine residues Cys-1464 or Cys-2085 is important for the enzyme dimerization. In adipocytes, S-nitrosylation of Fatty acid synthase occurs under physiological conditions and gradually increases during adipogenesis.

The protein localises to the cytoplasm. Its subcellular location is the melanosome. The enzyme catalyses acetyl-CoA + n malonyl-CoA + 2n NADPH + 2n H(+) = a long-chain fatty acid + (n+1) CoA + n CO2 + 2n NADP(+).. It catalyses the reaction holo-[ACP] + acetyl-CoA = acetyl-[ACP] + CoA. The catalysed reaction is holo-[ACP] + malonyl-CoA = malonyl-[ACP] + CoA. It carries out the reaction a fatty acyl-[ACP] + malonyl-[ACP] + H(+) = a 3-oxoacyl-[ACP] + holo-[ACP] + CO2. The enzyme catalyses a (3R)-hydroxyacyl-[ACP] + NADP(+) = a 3-oxoacyl-[ACP] + NADPH + H(+). It catalyses the reaction a (3R)-hydroxyacyl-[ACP] = a (2E)-enoyl-[ACP] + H2O. The catalysed reaction is a 2,3-saturated acyl-[ACP] + NADP(+) = a (2E)-enoyl-[ACP] + NADPH + H(+). It carries out the reaction hexadecanoyl-[ACP] + H2O = hexadecanoate + holo-[ACP] + H(+). The enzyme catalyses acetyl-[ACP] + malonyl-[ACP] + H(+) = 3-oxobutanoyl-[ACP] + holo-[ACP] + CO2. It catalyses the reaction 3-oxobutanoyl-[ACP] + NADPH + H(+) = (3R)-hydroxybutanoyl-[ACP] + NADP(+). The catalysed reaction is (3R)-hydroxybutanoyl-[ACP] = (2E)-butenoyl-[ACP] + H2O. It carries out the reaction (2E)-butenoyl-[ACP] + NADPH + H(+) = butanoyl-[ACP] + NADP(+). The enzyme catalyses butanoyl-[ACP] + malonyl-[ACP] + H(+) = 3-oxohexanoyl-[ACP] + holo-[ACP] + CO2. It catalyses the reaction 3-oxohexanoyl-[ACP] + NADPH + H(+) = (3R)-hydroxyhexanoyl-[ACP] + NADP(+). The catalysed reaction is (3R)-hydroxyhexanoyl-[ACP] = (2E)-hexenoyl-[ACP] + H2O. It carries out the reaction (2E)-hexenoyl-[ACP] + NADPH + H(+) = hexanoyl-[ACP] + NADP(+). The enzyme catalyses hexanoyl-[ACP] + malonyl-[ACP] + H(+) = 3-oxooctanoyl-[ACP] + holo-[ACP] + CO2. It catalyses the reaction 3-oxooctanoyl-[ACP] + NADPH + H(+) = (3R)-hydroxyoctanoyl-[ACP] + NADP(+). The catalysed reaction is (3R)-hydroxyoctanoyl-[ACP] = (2E)-octenoyl-[ACP] + H2O. It carries out the reaction (2E)-octenoyl-[ACP] + NADPH + H(+) = octanoyl-[ACP] + NADP(+). The enzyme catalyses octanoyl-[ACP] + malonyl-[ACP] + H(+) = 3-oxodecanoyl-[ACP] + holo-[ACP] + CO2. It catalyses the reaction 3-oxodecanoyl-[ACP] + NADPH + H(+) = (3R)-hydroxydecanoyl-[ACP] + NADP(+). The catalysed reaction is (3R)-hydroxydecanoyl-[ACP] = (2E)-decenoyl-[ACP] + H2O. It carries out the reaction (2E)-decenoyl-[ACP] + NADPH + H(+) = decanoyl-[ACP] + NADP(+). The enzyme catalyses decanoyl-[ACP] + malonyl-[ACP] + H(+) = 3-oxododecanoyl-[ACP] + holo-[ACP] + CO2. It catalyses the reaction 3-oxododecanoyl-[ACP] + NADPH + H(+) = (3R)-hydroxydodecanoyl-[ACP] + NADP(+). The catalysed reaction is (3R)-hydroxydodecanoyl-[ACP] = (2E)-dodecenoyl-[ACP] + H2O. It carries out the reaction (2E)-dodecenoyl-[ACP] + NADPH + H(+) = dodecanoyl-[ACP] + NADP(+). The enzyme catalyses dodecanoyl-[ACP] + malonyl-[ACP] + H(+) = 3-oxotetradecanoyl-[ACP] + holo-[ACP] + CO2. It catalyses the reaction 3-oxotetradecanoyl-[ACP] + NADPH + H(+) = (3R)-hydroxytetradecanoyl-[ACP] + NADP(+). The catalysed reaction is (3R)-hydroxytetradecanoyl-[ACP] = (2E)-tetradecenoyl-[ACP] + H2O. It carries out the reaction (2E)-tetradecenoyl-[ACP] + NADPH + H(+) = tetradecanoyl-[ACP] + NADP(+). The enzyme catalyses tetradecanoyl-[ACP] + malonyl-[ACP] + H(+) = 3-oxohexadecanoyl-[ACP] + holo-[ACP] + CO2. It catalyses the reaction 3-oxohexadecanoyl-[ACP] + NADPH + H(+) = (3R)-hydroxyhexadecanoyl-[ACP] + NADP(+). The catalysed reaction is (3R)-hydroxyhexadecanoyl-[ACP] = (2E)-hexadecenoyl-[ACP] + H2O. It carries out the reaction (2E)-hexadecenoyl-[ACP] + NADPH + H(+) = hexadecanoyl-[ACP] + NADP(+). The enzyme catalyses hexadecanoyl-[ACP] + malonyl-[ACP] + H(+) = 3-oxooctadecanoyl-[ACP] + holo-[ACP] + CO2. It catalyses the reaction 3-oxooctadecanoyl-[ACP] + NADPH + H(+) = (3R)-hydroxyoctadecanoyl-[ACP] + NADP(+). The catalysed reaction is (3R)-hydroxyoctadecanoyl-[ACP] = (2E)-octadecenoyl-[ACP] + H2O. It carries out the reaction (2E)-octadecenoyl-[ACP] + NADPH + H(+) = octadecanoyl-[ACP] + NADP(+). The enzyme catalyses tetradecanoyl-[ACP] + H2O = tetradecanoate + holo-[ACP] + H(+). It catalyses the reaction octadecanoyl-[ACP] + H2O = octadecanoate + holo-[ACP] + H(+). It participates in lipid metabolism; fatty acid biosynthesis. Cerulenin, a potent non-competitive pharmacological inhibitor of FAS, binds covalently to the active site of the condensing enzyme region, inactivating a key enzyme step in fatty acid synthesis. Another inhibitor, though less efficient, is C75, a member of the alpha-methylene-gamma-butyrolactone chemical class, also proposed as an antitumour and anti-obesity agent. In terms of biological role, fatty acid synthetase is a multifunctional enzyme that catalyzes the de novo biosynthesis of long-chain saturated fatty acids starting from acetyl-CoA and malonyl-CoA in the presence of NADPH. This multifunctional protein contains 7 catalytic activities and a site for the binding of the prosthetic group 4'-phosphopantetheine of the acyl carrier protein ([ACP]) domain. This chain is Fatty acid synthase (Fasn), found in Rattus norvegicus (Rat).